The primary structure comprises 202 residues: Probable chemoreceptor glutamine deamidase CheD 2 (202 aa).

This sequence belongs to the CheD family.

It catalyses the reaction L-glutaminyl-[protein] + H2O = L-glutamyl-[protein] + NH4(+). Functionally, probably deamidates glutamine residues to glutamate on methyl-accepting chemotaxis receptors (MCPs), playing an important role in chemotaxis. The polypeptide is Probable chemoreceptor glutamine deamidase CheD 2 (Shewanella oneidensis (strain ATCC 700550 / JCM 31522 / CIP 106686 / LMG 19005 / NCIMB 14063 / MR-1)).